Consider the following 206-residue polypeptide: MELKLLNDQGQAASNVAAPDTIFGRDYNEALIHQVVVAYQANARSGNRKQKDREEVHHTTKKPWRQKGTGRARAGMSSSPLWRGGGRIFPNSPDENFSHKVNKKMYRAGVCSILSQLAREGRLSVIENLSVEAPKTKLLSQKLKGMGLDSVLVITDSLDENLLLASRNLPNVLICEPRHADPVSLVFYKKILITKLALAKIEEMLA.

The tract at residues 43–78 is disordered; that stretch reads ARSGNRKQKDREEVHHTTKKPWRQKGTGRARAGMSS. The span at 49–58 shows a compositional bias: basic and acidic residues; that stretch reads KQKDREEVHH. Residues 59 to 70 are compositionally biased toward basic residues; the sequence is TTKKPWRQKGTG.

This sequence belongs to the universal ribosomal protein uL4 family. In terms of assembly, part of the 50S ribosomal subunit.

Functionally, one of the primary rRNA binding proteins, this protein initially binds near the 5'-end of the 23S rRNA. It is important during the early stages of 50S assembly. It makes multiple contacts with different domains of the 23S rRNA in the assembled 50S subunit and ribosome. Forms part of the polypeptide exit tunnel. The chain is Large ribosomal subunit protein uL4 from Janthinobacterium sp. (strain Marseille) (Minibacterium massiliensis).